Consider the following 156-residue polypeptide: Putative HTH-type transcriptional regulator BadM (156 aa).

One can recognise an HTH rrf2-type domain in the interval 4 to 130; sequence RLQKSTMCGL…RSVSITSLLK (127 aa). Residues 136-156 form a disordered region; it reads RRKTERGPNGASARHSSAGRA. The segment covering 145-156 has biased composition (low complexity); sequence GASARHSSAGRA.

This Rhodopseudomonas palustris (strain ATCC BAA-98 / CGA009) protein is Putative HTH-type transcriptional regulator BadM (badM).